We begin with the raw amino-acid sequence, 214 residues long: Ribonuclease HII (214 aa).

An RNase H type-2 domain is found at Glu-26–Arg-214. 3 residues coordinate a divalent metal cation: Asp-32, Glu-33, and Asp-124.

The protein belongs to the RNase HII family. The cofactor is Mn(2+). Requires Mg(2+) as cofactor.

Its subcellular location is the cytoplasm. It catalyses the reaction Endonucleolytic cleavage to 5'-phosphomonoester.. Its function is as follows. Endonuclease that specifically degrades the RNA of RNA-DNA hybrids. The protein is Ribonuclease HII of Burkholderia lata (strain ATCC 17760 / DSM 23089 / LMG 22485 / NCIMB 9086 / R18194 / 383).